The following is a 428-amino-acid chain: Adenylosuccinate synthetase (428 aa).

Residues 12–18 (GDEGKGK) and 40–42 (GHT) each bind GTP. Aspartate 13 functions as the Proton acceptor in the catalytic mechanism. Positions 13 and 40 each coordinate Mg(2+). IMP-binding positions include 13–16 (DEGK), 38–41 (NAGH), threonine 130, arginine 144, glutamine 225, threonine 240, and arginine 304. Histidine 41 (proton donor) is an active-site residue. 300–306 (VTTGRAR) contributes to the substrate binding site. GTP is bound by residues arginine 306, 332–334 (KID), and 414–416 (SVG).

The protein belongs to the adenylosuccinate synthetase family. As to quaternary structure, homodimer. The cofactor is Mg(2+).

It is found in the cytoplasm. It carries out the reaction IMP + L-aspartate + GTP = N(6)-(1,2-dicarboxyethyl)-AMP + GDP + phosphate + 2 H(+). Its pathway is purine metabolism; AMP biosynthesis via de novo pathway; AMP from IMP: step 1/2. Its function is as follows. Plays an important role in the de novo pathway of purine nucleotide biosynthesis. Catalyzes the first committed step in the biosynthesis of AMP from IMP. The chain is Adenylosuccinate synthetase from Clostridium botulinum (strain ATCC 19397 / Type A).